Consider the following 313-residue polypeptide: GDP-D-glycero-alpha-D-manno-heptose dehydrogenase (313 aa).

NADH contacts are provided by residues Tyr13–Ile14, Asp33–Gln39, Phe37, Asp57–Ala58, Leu77, and Tyr144–Lys148. Residue Thr168 coordinates GDP. NADH is bound by residues Val169 and Arg175 to Arg177. Residues Asp179 to Asp184, Val196 to Phe198, Arg204, Lys242, and Arg270 each bind GDP. NADH is bound at residue Asn311.

In terms of assembly, homotetramer. NAD(+) is required as a cofactor.

It catalyses the reaction GDP-D-glycero-alpha-D-manno-heptose + 2-oxoglutarate = GDP-D-glycero-4-keto-alpha-D-lyxo-heptose + (S)-2-hydroxyglutarate. It participates in capsule biogenesis; capsule polysaccharide biosynthesis. In terms of biological role, NAD-dependent dehydrogenase involved in the biosynthesis of heptose moieties with a hydroxyl group at C6 found on the capsular polysaccharide (CPS) of C.jejuni. Catalyzes the initial oxidation of C4 of the GDP-D-glycero-alpha-D-manno-heptose to form GDP-D-glycero-4-keto-alpha-D-lyxo-heptose in the presence of alpha-ketoglutarate required to recycle the NADH nucleotide. In Campylobacter jejuni subsp. jejuni serotype O:2 (strain ATCC 700819 / NCTC 11168), this protein is GDP-D-glycero-alpha-D-manno-heptose dehydrogenase.